We begin with the raw amino-acid sequence, 500 residues long: L-arabinose isomerase (500 aa).

Residues glutamate 306, glutamate 333, histidine 349, and histidine 448 each contribute to the Mn(2+) site.

Belongs to the arabinose isomerase family. The cofactor is Mn(2+).

It carries out the reaction beta-L-arabinopyranose = L-ribulose. It participates in carbohydrate degradation; L-arabinose degradation via L-ribulose; D-xylulose 5-phosphate from L-arabinose (bacterial route): step 1/3. Its function is as follows. Catalyzes the conversion of L-arabinose to L-ribulose. In Shewanella baltica (strain OS223), this protein is L-arabinose isomerase.